We begin with the raw amino-acid sequence, 653 residues long: Calpain-10 (653 aa).

Residues leucine 13 to isoleucine 321 enclose the Calpain catalytic domain. Residues cysteine 73, histidine 238, and asparagine 263 contribute to the active site. 2 domain III regions span residues threonine 322–serine 494 and glutamate 513–glutamine 653.

This sequence belongs to the peptidase C2 family.

Functionally, calcium-regulated non-lysosomal thiol-protease which catalyzes limited proteolysis of substrates involved in cytoskeletal remodeling and signal transduction. May play a role in insulin-stimulated glucose uptake. This chain is Calpain-10 (CAPN10), found in Macaca fascicularis (Crab-eating macaque).